A 249-amino-acid chain; its full sequence is 5'-nucleotidase SurE (249 aa).

Asp8, Asp9, Ser39, and Asn91 together coordinate a divalent metal cation.

The protein belongs to the SurE nucleotidase family. A divalent metal cation is required as a cofactor.

It is found in the cytoplasm. It carries out the reaction a ribonucleoside 5'-phosphate + H2O = a ribonucleoside + phosphate. Nucleotidase that shows phosphatase activity on nucleoside 5'-monophosphates. The chain is 5'-nucleotidase SurE from Ectopseudomonas mendocina (strain ymp) (Pseudomonas mendocina).